We begin with the raw amino-acid sequence, 167 residues long: Large ribosomal subunit protein uL23 (167 aa).

The interval 1 to 118 is large ribosomal subunit protein uL23; sequence MNVNEIIKGP…TEEKAKIAKK (118 aa). Disordered stretches follow at residues 91–112 and 136–167; these read FEDE…TEEK and KQAE…NSAN. Composition is skewed to basic and acidic residues over residues 97-112 and 136-157; these read QDQK…TEEK and KQAE…RIEN. The segment at 119–167 is unknown; that stretch reads KAELEAKNKEIAEKLAKKQAELAKKDSETNENQEKRIENQTENQENSAN. Residues 158-167 show a composition bias toward polar residues; sequence QTENQENSAN.

It belongs to the universal ribosomal protein uL23 family. As to quaternary structure, part of the 50S ribosomal subunit. Contacts protein L29, and trigger factor when it is bound to the ribosome.

Functionally, one of the early assembly proteins it binds 23S rRNA. One of the proteins that surrounds the polypeptide exit tunnel on the outside of the ribosome. Forms the main docking site for trigger factor binding to the ribosome. This Mesomycoplasma hyopneumoniae (strain J / ATCC 25934 / NCTC 10110) (Mycoplasma hyopneumoniae) protein is Large ribosomal subunit protein uL23.